The following is a 242-amino-acid chain: Succinyl-CoA:3-ketoacid coenzyme A transferase subunit A (242 aa).

Residue 33–39 (GGFGLCG) participates in CoA binding.

It belongs to the 3-oxoacid CoA-transferase subunit A family. As to quaternary structure, heterodimer of a subunit A and a subunit B.

It catalyses the reaction a 3-oxo acid + succinyl-CoA = a 3-oxoacyl-CoA + succinate. The protein operates within bacterial outer membrane biogenesis; lipopolysaccharide biosynthesis. This is Succinyl-CoA:3-ketoacid coenzyme A transferase subunit A (lpsI) from Xanthomonas campestris pv. campestris (strain ATCC 33913 / DSM 3586 / NCPPB 528 / LMG 568 / P 25).